A 499-amino-acid polypeptide reads, in one-letter code: Anaerobic magnesium-protoporphyrin IX monomethyl ester cyclase (499 aa).

A B12-binding domain is found at 9-145; the sequence is PHPAIGSRIP…AALENHNDLN (137 aa). Positions 188–420 constitute a Radical SAM core domain; that stretch reads YGGKQAVVIQ…PPWRIFLWVK (233 aa). [4Fe-4S] cluster-binding residues include Cys202, Cys206, and Cys209.

It belongs to the BchE family. The cofactor is [4Fe-4S] cluster. Adenosylcob(III)alamin is required as a cofactor.

It catalyses the reaction Mg-protoporphyrin IX 13-monomethyl ester + 3 S-adenosyl-L-methionine + H2O = 3,8-divinyl protochlorophyllide a + 3 5'-deoxyadenosine + 3 L-methionine + 4 H(+). Its pathway is porphyrin-containing compound metabolism; bacteriochlorophyll biosynthesis (light-independent). Involved in the tetrapyrrole biosynthetic pathways leading to chlorophyll and bacteriochlorophyll (BChl). Catalyzes the anaerobic formation of the isocyclic ring (E-ring) in Mg-protoporphyrin monomethyl ester (MPE) to yield protochlorophyllide a (PChlide a) via a six-electron oxidation and the formation of an oxo group at position C13 using oxygen from a water molecule. This chain is Anaerobic magnesium-protoporphyrin IX monomethyl ester cyclase, found in Synechocystis sp. (strain ATCC 27184 / PCC 6803 / Kazusa).